A 460-amino-acid polypeptide reads, in one-letter code: Glutamate--tRNA ligase 2 (460 aa).

A 'HIGH' region motif is present at residues 8 to 18 (PSPTGFLHVGG). Positions 237-241 (KLSKR) match the 'KMSKS' region motif. Lysine 240 provides a ligand contact to ATP.

Belongs to the class-I aminoacyl-tRNA synthetase family. Glutamate--tRNA ligase type 1 subfamily. Monomer.

Its subcellular location is the cytoplasm. The enzyme catalyses tRNA(Glu) + L-glutamate + ATP = L-glutamyl-tRNA(Glu) + AMP + diphosphate. Functionally, catalyzes the attachment of glutamate to tRNA(Glu) in a two-step reaction: glutamate is first activated by ATP to form Glu-AMP and then transferred to the acceptor end of tRNA(Glu). The chain is Glutamate--tRNA ligase 2 from Campylobacter fetus subsp. fetus (strain 82-40).